A 4083-amino-acid chain; its full sequence is Dynein heavy chain, cytoplasmic (4083 aa).

Positions 1–1745 (MTDDQVAQAL…TIEQSCVSFC (1745 aa)) are stem. Coiled-coil stretches lie at residues 127-166 (DAVVSTNSNLEAKQESINSARRKIKDLSLSLQSLQQFIEV), 381-402 (INQWEALLKEFTSLIRELMRKR), and 801-821 (KLDLQNLEVLINKIQLLVDQA). 4 AAA regions span residues 1746–1967 (YGFE…VLRN), 2026–2265 (SYLA…YKAD), 2373–2622 (SLES…WVRG), and 2716–2980 (TFAE…GNSQ). Residues 1784–1791 (GPAGTGKT), 2064–2071 (GDAGTGKT), 2412–2419 (GPPGSGKT), and 2754–2761 (GPNYSGKT) each bind ATP. The stalk stretch occupies residues 2987 to 3294 (LTSLRRFQSL…RSIKLMESLT (308 aa)). Coiled coils occupy residues 3015–3085 (LEKL…NERR), 3223–3302 (LKEE…RWIK), and 3527–3607 (LEKE…VEDL). 2 AAA regions span residues 3364-3592 (MVNP…EIAK) and 3748-3952 (LKSL…FLDH).

The protein belongs to the dynein heavy chain family. Consists of at least two heavy chains and a number of intermediate and light chains.

It is found in the cytoplasm. The protein localises to the cytoskeleton. Cytoplasmic dynein acts as a motor for the intracellular retrograde motility of vesicles and organelles along microtubules. Dynein has ATPase activity; the force-producing power stroke is thought to occur on release of ADP. Required to maintain uniform nuclear distribution in hyphae. May play an important role in the proper orientation of the mitotic spindle into the budding daughter cell yeast. Probably required for normal progression of the cell cycle. This Eremothecium gossypii (strain ATCC 10895 / CBS 109.51 / FGSC 9923 / NRRL Y-1056) (Yeast) protein is Dynein heavy chain, cytoplasmic (DYN1).